The chain runs to 431 residues: Isocitrate lyase (431 aa).

The interval 1–21 (MSNVGTPRTAQEIQQDWDTNP) is disordered. 93 to 95 (SGW) is a substrate binding site. D155 is a Mg(2+) binding site. C193 serves as the catalytic Proton acceptor. Residues 194–195 (GH), R230, 315–319 (NCSPS), and T349 contribute to the substrate site.

Belongs to the isocitrate lyase/PEP mutase superfamily. Isocitrate lyase family. As to quaternary structure, homotetramer. The cofactor is Mg(2+).

The catalysed reaction is D-threo-isocitrate = glyoxylate + succinate. It functions in the pathway carbohydrate metabolism; glyoxylate cycle; (S)-malate from isocitrate: step 1/2. Functionally, involved in the metabolic adaptation in response to environmental changes. Catalyzes the reversible formation of succinate and glyoxylate from isocitrate, a key step of the glyoxylate cycle, which operates as an anaplerotic route for replenishing the tricarboxylic acid cycle during growth on fatty acid substrates. The protein is Isocitrate lyase (aceA) of Corynebacterium efficiens (strain DSM 44549 / YS-314 / AJ 12310 / JCM 11189 / NBRC 100395).